Here is a 336-residue protein sequence, read N- to C-terminus: Ketol-acid reductoisomerase (NADP(+)) 1 (336 aa).

The KARI N-terminal Rossmann domain maps to 2 to 181 (AKVYYEKDVT…GATRAGVLET (180 aa)). NADP(+) contacts are provided by residues 25–28 (YGSQ), arginine 48, serine 52, and 82–85 (DELQ). Residue histidine 107 is part of the active site. Residue glycine 133 coordinates NADP(+). In terms of domain architecture, KARI C-terminal knotted spans 182-327 (TFKEETETDL…RKLREMMPFV (146 aa)). Residues aspartate 190, glutamate 194, glutamate 226, and glutamate 230 each contribute to the Mg(2+) site. Position 251 (serine 251) interacts with substrate.

Belongs to the ketol-acid reductoisomerase family. Mg(2+) is required as a cofactor.

The catalysed reaction is (2R)-2,3-dihydroxy-3-methylbutanoate + NADP(+) = (2S)-2-acetolactate + NADPH + H(+). The enzyme catalyses (2R,3R)-2,3-dihydroxy-3-methylpentanoate + NADP(+) = (S)-2-ethyl-2-hydroxy-3-oxobutanoate + NADPH + H(+). Its pathway is amino-acid biosynthesis; L-isoleucine biosynthesis; L-isoleucine from 2-oxobutanoate: step 2/4. The protein operates within amino-acid biosynthesis; L-valine biosynthesis; L-valine from pyruvate: step 2/4. In terms of biological role, involved in the biosynthesis of branched-chain amino acids (BCAA). Catalyzes an alkyl-migration followed by a ketol-acid reduction of (S)-2-acetolactate (S2AL) to yield (R)-2,3-dihydroxy-isovalerate. In the isomerase reaction, S2AL is rearranged via a Mg-dependent methyl migration to produce 3-hydroxy-3-methyl-2-ketobutyrate (HMKB). In the reductase reaction, this 2-ketoacid undergoes a metal-dependent reduction by NADPH to yield (R)-2,3-dihydroxy-isovalerate. In Bacillus thuringiensis subsp. konkukian (strain 97-27), this protein is Ketol-acid reductoisomerase (NADP(+)) 1.